Here is a 349-residue protein sequence, read N- to C-terminus: Hydroxymethylglutaryl-CoA synthase (349 aa).

Positions 29 and 30 each coordinate (3S)-3-hydroxy-3-methylglutaryl-CoA. Residue Glu81 is the Proton donor/acceptor of the active site. Residues Cys113 and Thr154 each coordinate (3S)-3-hydroxy-3-methylglutaryl-CoA. Cys113 (acyl-thioester intermediate) is an active-site residue. Arg202 provides a ligand contact to CoA. Positions 204 and 237 each coordinate (3S)-3-hydroxy-3-methylglutaryl-CoA. The active-site Proton donor/acceptor is His237. Lys242 contributes to the CoA binding site. (3S)-3-hydroxy-3-methylglutaryl-CoA is bound by residues Arg246, Asn269, and Ser299.

Belongs to the thiolase-like superfamily. Archaeal HMG-CoA synthase family. Interacts with acetoacetyl-CoA thiolase that catalyzes the precedent step in the pathway and with a DUF35 protein. The acetoacetyl-CoA thiolase/HMG-CoA synthase complex channels the intermediate via a fused CoA-binding site, which allows for efficient coupling of the endergonic thiolase reaction with the exergonic HMGCS reaction.

It carries out the reaction acetoacetyl-CoA + acetyl-CoA + H2O = (3S)-3-hydroxy-3-methylglutaryl-CoA + CoA + H(+). It participates in metabolic intermediate biosynthesis; (R)-mevalonate biosynthesis; (R)-mevalonate from acetyl-CoA: step 2/3. Catalyzes the condensation of acetyl-CoA with acetoacetyl-CoA to form 3-hydroxy-3-methylglutaryl-CoA (HMG-CoA). Functions in the mevalonate (MVA) pathway leading to isopentenyl diphosphate (IPP), a key precursor for the biosynthesis of isoprenoid compounds that are building blocks of archaeal membrane lipids. The sequence is that of Hydroxymethylglutaryl-CoA synthase from Methanococcoides burtonii (strain DSM 6242 / NBRC 107633 / OCM 468 / ACE-M).